We begin with the raw amino-acid sequence, 993 residues long: DNA-binding protein SMUBP-2 (993 aa).

At A2 the chain carries N-acetylalanine. ATP-binding positions include 213 to 220 (GPPGTGKT), Q402, Y441, and E570. The tract at residues 637-783 (TAFEYLDDIV…KARHITVSRR (147 aa)) is SS DNA-binding. Disordered regions lie at residues 650 to 723 (YTHE…GPDR), 765 to 815 (LRHD…EPVT), and 837 to 872 (RQQS…KGPV). Polar residues-rich tracts occupy residues 667–683 (PSTS…SGQE) and 703–716 (HVQS…NGSD). Positions 721-784 (PDRTEHFRAT…ARHITVSRRS (64 aa)) constitute an R3H domain. Residues 765–775 (LRHDSTGEGKA) are compositionally biased toward basic and acidic residues. Positions 784–794 (SPASSGSVAPQ) are enriched in low complexity. Phosphoserine occurs at positions 797 and 800. Positions 837 to 847 (RQQSSQAQTAK) are enriched in polar residues. The short motif at 862 to 866 (KKKKK) is the Nuclear localization signal element. An AN1-type; degenerate zinc finger spans residues 889–938 (VKADNTCSFSKCSVSTTTLGQFCMHCSHRYYLSHHLPEIHGCGEKARAHA). Residues C911, C914, H928, and C930 each contribute to the Zn(2+) site. The segment at 953–993 (GTKDRALDPAKRAQLQRRLDKKLGELSSQRTSRKKEKERGT) is disordered. Positions 954–976 (TKDRALDPAKRAQLQRRLDKKLG) are enriched in basic and acidic residues.

This sequence belongs to the DNA2/NAM7 helicase family. As to quaternary structure, homooligomer. Interacts with RUVBL1. Interacts with RUVBL2. Interacts with GTF3C1. Interacts with ABT1. Interacts with ribosomes. As to expression, in all tissues examined.

It is found in the nucleus. It localises to the cytoplasm. The protein localises to the cell projection. Its subcellular location is the axon. The enzyme catalyses ATP + H2O = ADP + phosphate + H(+). Its function is as follows. 5' to 3' helicase that unwinds RNA and DNA duplexes in an ATP-dependent reaction. Specific to 5'-phosphorylated single-stranded guanine-rich sequences. May play a role in RNA metabolism, ribosome biogenesis or initiation of translation. May play a role in regulation of transcription. Interacts with tRNA-Tyr. The chain is DNA-binding protein SMUBP-2 (Ighmbp2) from Mus musculus (Mouse).